The primary structure comprises 399 residues: S-adenosylmethionine synthase (399 aa).

136-141 contributes to the ATP binding site; it reads GTGSAD.

This sequence belongs to the AdoMet synthase 2 family. Mg(2+) serves as cofactor.

The catalysed reaction is L-methionine + ATP + H2O = S-adenosyl-L-methionine + phosphate + diphosphate. The protein operates within amino-acid biosynthesis; S-adenosyl-L-methionine biosynthesis; S-adenosyl-L-methionine from L-methionine: step 1/1. Functionally, catalyzes the formation of S-adenosylmethionine from methionine and ATP. In Methanothrix thermoacetophila (strain DSM 6194 / JCM 14653 / NBRC 101360 / PT) (Methanosaeta thermophila), this protein is S-adenosylmethionine synthase.